A 310-amino-acid polypeptide reads, in one-letter code: tRNA-cytidine(32) 2-sulfurtransferase (310 aa).

Positions 47–52 (SGGKDS) match the PP-loop motif motif. The [4Fe-4S] cluster site is built by Cys-122, Cys-125, and Cys-213.

Belongs to the TtcA family. Homodimer. The cofactor is Mg(2+). It depends on [4Fe-4S] cluster as a cofactor.

The protein resides in the cytoplasm. It carries out the reaction cytidine(32) in tRNA + S-sulfanyl-L-cysteinyl-[cysteine desulfurase] + AH2 + ATP = 2-thiocytidine(32) in tRNA + L-cysteinyl-[cysteine desulfurase] + A + AMP + diphosphate + H(+). Its pathway is tRNA modification. Catalyzes the ATP-dependent 2-thiolation of cytidine in position 32 of tRNA, to form 2-thiocytidine (s(2)C32). The sulfur atoms are provided by the cysteine/cysteine desulfurase (IscS) system. This chain is tRNA-cytidine(32) 2-sulfurtransferase, found in Haemophilus influenzae (strain PittEE).